The primary structure comprises 124 residues: Small ribosomal subunit protein bS6 (124 aa).

Residues 93 to 124 (KKAETGPSSMMKTVEREEARKAQQAEYAANNS) form a disordered region. Positions 105 to 115 (TVEREEARKAQ) are enriched in basic and acidic residues.

This sequence belongs to the bacterial ribosomal protein bS6 family.

Functionally, binds together with bS18 to 16S ribosomal RNA. In Variovorax paradoxus (strain S110), this protein is Small ribosomal subunit protein bS6.